The following is a 366-amino-acid chain: Phospho-N-acetylmuramoyl-pentapeptide-transferase (366 aa).

The next 10 helical transmembrane spans lie at 3-23 (QIFIAGAVAFLVSVFLTPVLI), 54-74 (GIAVLAGIVFGYLIAVLVGLV), 80-100 (PGVSGWLVLGLTLALGGLGFA), 120-140 (LVGQLVTAIVFGLLILQFPNA), 161-181 (IAIGPAIVGMILFLIFIYLVI), 197-217 (LASGVTAIVMGTYVLITFWQF), 238-258 (LSMLASAGLGACLGFLWWNAA), 262-282 (IFMGDTGSLALGGLVAGLSVT), 288-308 (LMILVGIIFVIEAASVVIQVV), and 341-361 (FWLLAALAAMSGFAVFYAEWL).

The protein belongs to the glycosyltransferase 4 family. MraY subfamily. The cofactor is Mg(2+).

The protein resides in the cell membrane. The catalysed reaction is UDP-N-acetyl-alpha-D-muramoyl-L-alanyl-gamma-D-glutamyl-meso-2,6-diaminopimeloyl-D-alanyl-D-alanine + di-trans,octa-cis-undecaprenyl phosphate = di-trans,octa-cis-undecaprenyl diphospho-N-acetyl-alpha-D-muramoyl-L-alanyl-D-glutamyl-meso-2,6-diaminopimeloyl-D-alanyl-D-alanine + UMP. The protein operates within cell wall biogenesis; peptidoglycan biosynthesis. In terms of biological role, catalyzes the initial step of the lipid cycle reactions in the biosynthesis of the cell wall peptidoglycan: transfers peptidoglycan precursor phospho-MurNAc-pentapeptide from UDP-MurNAc-pentapeptide onto the lipid carrier undecaprenyl phosphate, yielding undecaprenyl-pyrophosphoryl-MurNAc-pentapeptide, known as lipid I. This is Phospho-N-acetylmuramoyl-pentapeptide-transferase from Corynebacterium jeikeium (strain K411).